Consider the following 189-residue polypeptide: Ras-like protein 1 (189 aa).

GTP is bound at residue Gly10–Ser17. Positions Tyr32–Tyr40 match the Effector region motif. GTP contacts are provided by residues Asp57–Gln61 and Asn116–Asp119. The residue at position 186 (Cys186) is a Cysteine methyl ester. Cys186 is lipidated: S-geranylgeranyl cysteine. Residues Lys187–Leu189 constitute a propeptide, removed in mature form.

The protein belongs to the small GTPase superfamily. Ras family.

The protein resides in the cell membrane. The enzyme catalyses GTP + H2O = GDP + phosphate + H(+). Alternates between an inactive form bound to GDP and an active form bound to GTP. Activated by a guanine nucleotide-exchange factor (GEF) and inactivated by a GTPase-activating protein (GAP). Its function is as follows. Ras proteins bind GDP/GTP and possess intrinsic GTPase activity. Plays a role in eye development by regulating cell growth, survival of postmitotic ommatidial cells and differentiation of photoreceptor cells. During larval development, mediates Ptth/tor signaling leading to the production of ecdysone, a hormone required for the initiation of metamorphosis. The sequence is that of Ras-like protein 1 from Drosophila grimshawi (Hawaiian fruit fly).